Reading from the N-terminus, the 441-residue chain is Probable D-serine dehydratase (441 aa).

At K115 the chain carries N6-(pyridoxal phosphate)lysine.

Belongs to the serine/threonine dehydratase family. DsdA subfamily. Pyridoxal 5'-phosphate is required as a cofactor.

The catalysed reaction is D-serine = pyruvate + NH4(+). The protein is Probable D-serine dehydratase of Fusobacterium nucleatum subsp. nucleatum (strain ATCC 25586 / DSM 15643 / BCRC 10681 / CIP 101130 / JCM 8532 / KCTC 2640 / LMG 13131 / VPI 4355).